The sequence spans 36 residues: Delta-amaurobitoxin-Pl1c (36 aa).

4 disulfide bridges follow: C3-C19, C10-C24, C18-C34, and C26-C32.

In terms of tissue distribution, expressed by the venom gland.

The protein localises to the secreted. Functionally, binds at site 4 of sodium channels (Nav) and inhibits the fast inactivation of cockroach channels. This toxin is active only on insects. Has a potent activity against S.litura larvae. This is Delta-amaurobitoxin-Pl1c from Pireneitega luctuosa (Tangled nest spider).